Consider the following 267-residue polypeptide: Phosphatidylglycerol--prolipoprotein diacylglyceryl transferase (267 aa).

4 helical membrane-spanning segments follow: residues 20–40, 57–77, 88–108, and 117–137; these read LEIR…VYLA, FILI…VAFS, IFAI…GAIV, and FINT…AQAI. Arg139 is an a 1,2-diacyl-sn-glycero-3-phospho-(1'-sn-glycerol) binding site. The next 3 membrane-spanning stretches (helical) occupy residues 175–195, 205–225, and 235–255; these read QPTF…VCVL, GEIT…IEGL, and IRVS…MVVL.

It belongs to the Lgt family.

Its subcellular location is the cell membrane. The enzyme catalyses L-cysteinyl-[prolipoprotein] + a 1,2-diacyl-sn-glycero-3-phospho-(1'-sn-glycerol) = an S-1,2-diacyl-sn-glyceryl-L-cysteinyl-[prolipoprotein] + sn-glycerol 1-phosphate + H(+). It participates in protein modification; lipoprotein biosynthesis (diacylglyceryl transfer). Catalyzes the transfer of the diacylglyceryl group from phosphatidylglycerol to the sulfhydryl group of the N-terminal cysteine of a prolipoprotein, the first step in the formation of mature lipoproteins. The polypeptide is Phosphatidylglycerol--prolipoprotein diacylglyceryl transferase (Streptococcus suis (strain 98HAH33)).